Here is a 69-residue protein sequence, read N- to C-terminus: MKKGIHPELKLITVKCTCGAEHKFWTMKEDIKIDLCSNCHPFYKGDTGSLIVDTEGRVQKFRNKYGDNY.

C16, C18, C36, and C39 together coordinate Zn(2+).

Belongs to the bacterial ribosomal protein bL31 family. Type A subfamily. Part of the 50S ribosomal subunit. It depends on Zn(2+) as a cofactor.

In terms of biological role, binds the 23S rRNA. This is Large ribosomal subunit protein bL31 from Kosmotoga olearia (strain ATCC BAA-1733 / DSM 21960 / TBF 19.5.1).